Here is a 514-residue protein sequence, read N- to C-terminus: Photosystem II CP47 reaction center protein (514 aa).

The next 6 membrane-spanning stretches (helical) occupy residues 21–36 (AVHL…WAGS), 109–123 (IVLS…VWHW), 148–164 (GGHL…FGTF), 211–226 (IAAG…FHLT), 245–260 (ALAS…AFVV), and 465–480 (CFAL…HGAR).

Belongs to the PsbB/PsbC family. PsbB subfamily. In terms of assembly, PSII is composed of 1 copy each of membrane proteins PsbA, PsbB, PsbC, PsbD, PsbE, PsbF, PsbH, PsbI, PsbJ, PsbK, PsbL, PsbM, PsbT, PsbX, PsbY, PsbZ, Psb30/Ycf12, peripheral proteins PsbO, CyanoQ (PsbQ), PsbU, PsbV and a large number of cofactors. It forms dimeric complexes. Requires Binds multiple chlorophylls. PSII binds additional chlorophylls, carotenoids and specific lipids. as cofactor.

It localises to the cellular thylakoid membrane. In terms of biological role, one of the components of the core complex of photosystem II (PSII). It binds chlorophyll and helps catalyze the primary light-induced photochemical processes of PSII. PSII is a light-driven water:plastoquinone oxidoreductase, using light energy to abstract electrons from H(2)O, generating O(2) and a proton gradient subsequently used for ATP formation. The protein is Photosystem II CP47 reaction center protein of Prochlorothrix hollandica.